An 882-amino-acid chain; its full sequence is HTH-type transcriptional regulator AlkS (882 aa).

Ala51–Thr58 is a binding site for ATP. Residues Glu815–Gly880 enclose the HTH luxR-type domain. A DNA-binding region (H-T-H motif) is located at residues Asn839–Arg858.

It functions in the pathway hydrocarbon metabolism; alkane degradation. In terms of biological role, this protein activates the expression of alkBFGHJKL operon in the presence of alkanes. The polypeptide is HTH-type transcriptional regulator AlkS (alkS) (Ectopseudomonas oleovorans (Pseudomonas oleovorans)).